Consider the following 88-residue polypeptide: Arminin 1a (88 aa).

A signal peptide spans 1 to 18 (MKTVLAFLFLPFIAFTHA). A propeptide spanning residues 19 to 57 (ESYEDVKEEIKNEAEKEIFEDLEEESDALDSSVREFNDA) is cleaved from the precursor. Valine 85 is subject to Valine amide.

This sequence belongs to the arminin family. In terms of tissue distribution, expressed in entodermal epithelium along the body column.

The protein resides in the secreted. It is found in the target cell membrane. Antimicrobial peptide with a broad-spectrum antimicrobial activity. Shows very strong bactericidal activity against B.megaterium (MBC=0.1 uM), E.coli (MBC=0.2 uM), S.aureus (MBC=0.4 uM), methicillin-resistant S.aureus (MRSA) (MBC=0.4-0.8 uM), vancomycin-resistant enterococci (VRE) (E.faecalis (MBC=1.6 uM), and E.faecium (MBC=0.4-0.8 uM)), and extended-spectrum beta-lactamase (ESBL)-producing enterobacteriaceae strains (K.pneumoniae (MBC=0.4-0.8 uM), E.coli (MBC=0.2-0.4 uM)). Keeps its antibacterial activity under a wide range of salt concentrations that mimic physiological conditions of human blood, which is surprising, since Hydra is an obligate freshwater animal with nearly no salt tolerance. Does not affect red blood cells. In Hydra vulgaris (Hydra), this protein is Arminin 1a.